A 22-amino-acid chain; its full sequence is uncharacterized protein (22 aa).

This sequence belongs to the asfivirus C84L family.

This is an uncharacterized protein from Ornithodoros (relapsing fever ticks).